We begin with the raw amino-acid sequence, 91 residues long: Putative regulatory protein DSY2730 (91 aa).

This sequence belongs to the RemA family.

This Desulfitobacterium hafniense (strain Y51) protein is Putative regulatory protein DSY2730.